The sequence spans 387 residues: DNA-damage-repair/toleration protein 111 (387 aa).

The interval 1 to 213 (MLGGLYGDLP…TSGLGVGAGG (213 aa)) is disordered. Residues 19–29 (SGNSSSVWSSS) are compositionally biased toward low complexity. The segment covering 103–158 (DPARPNDYEEYKREKKRKATEAEMKREMDKRRQEDEERDKREREEREKERERDNSD) has biased composition (basic and acidic residues). One can recognise a G-patch domain in the interval 214-260 (QMTAAQRMMAKMGWKQGQGLGKSEQGITTPLMAKKTDRRAGVIVNAS). Residues 283–369 (RVLLLRNMVG…RTVRATFYDE (87 aa)) enclose the RRM domain.

In terms of assembly, component of the SWAP1-SFPS-RRC1 splicing factor complex which modulates pre-mRNA splicing to promote photomorphogenesis. Interacts with SWAP1 in a light-independent manner. Associates with the photoreceptor phytochrome B (phyB) in nuclear photobodies upon response to red light. Binds to the splicing factor 1 SF1, involved in 3' splicing site recognition. As to expression, expressed ubiquitously with highest levels in dry seeds and in cells surrounding the base of trichomes and guard cells.

The protein resides in the nucleus. It is found in the nucleus speckle. In terms of biological role, as a member of the SWAP1-SFPS-RRC1 splicing factor complex, modulates photomorphogenesis by regulating the gene expression and pre-messenger RNA (mRNA) alternative splicing of a large number of genes, including those involved in plant responses to light signaling, probably by helping in the 3' splice site determination. Associates with and regulates EARLY FLOWERING 3 (ELF3) mRNA processing, a key component of the circadian clock also involved in photomorphogenesis. Required for light-regulated (red, far-red and blue lights) photomorphogenesis in a PHYB- and PHYTOCHROME INTERACTING FACTORS- (PIFs) dependent manner. Promotes flowering under both short (SD) and long days (LD). Controls abscisic acid (ABA) sensitivity during seed development, stomatal responsiveness and germination by monitoring ABI3 splicing, upstream of the splicing factor SUPPRESSOR OF ABI3-ABI5. Seems to be involved in the resistance to UV light and chemical DNA-damaging agents. The polypeptide is DNA-damage-repair/toleration protein 111 (Arabidopsis thaliana (Mouse-ear cress)).